The chain runs to 273 residues: GDNF family receptor alpha-4 (273 aa).

A glycan (N-linked (GlcNAc...) asparagine) is linked at Asn192. Asn250 is lipidated: GPI-anchor amidated asparagine. The propeptide at 251–273 (AGCCFLWVSSMSILTALALQALL) is removed in mature form.

Belongs to the GDNFR family. In terms of assembly, interacts with ARTN ligand and RET: forms a 2:2:2 ternary complex composed of ARTN ligand, GFRA3 and RET receptor. Interacts with SORL1. As to expression, weakly expressed in heart, brain and testis.

Its subcellular location is the cell membrane. The protein resides in the secreted. Functionally, receptor for persephin (PSPN), a growth factor that exhibits neurotrophic activity on mesencephalic dopaminergic and motor neurons. Acts by binding to its coreceptor, GFRA4, leading to autophosphorylation and activation of the RET receptor. May be important in C-cell development and, in the postnatal development of the adrenal medulla. This is GDNF family receptor alpha-4 (Gfra4) from Rattus norvegicus (Rat).